The chain runs to 498 residues: MKKYIFMRVLRSLVSIFLVTTLTYTIIYTLVPRKLIFKQDPNYNKIATTADKRDNYENTVFERMGYIEYYDTKELQEKASSMDSSVTVEANATNKAIYEKYINQLGHGWTLGEFTESGQFYATREIPIFERVFHFYANLIDIDHTNKIQDPENPDLKRYLRFENDPAIGWSLVGSGTKHKYLLYFNSQFPFVHQNFVNLNLGDSYPTYANTPVLQVITQGQGQTKTAQVQFPTGKKTSSVNIYSRTYKSPSQADSREVASYGKDDPYTATESNYQYPSMIVSSAITGLIGLVLAYALAVPLGSAMARFKNTWIDSLSTGALTFLLALPTIALVYIVRLIGSSIALPDSFPILGAGDWRSYVLPAVILGLLGAPGTAIWIRRYMIDLQSQDFVRFARAKGLSEKEISNKHIFKNAMVPLVSGIPAAIIGVIGGATLTETVFAFPGMGKMLIDSVKASNNSMVVGLVFIFTCISIFSRLLGDIWMTIIDPRIKLTEKGGK.

The next 6 helical transmembrane spans lie at 12-32 (SLVS…TLVP), 279-299 (MIVS…ALAV), 316-336 (LSTG…VYIV), 359-379 (SYVL…AIWI), 415-435 (MVPL…GATL), and 461-481 (VVGL…LGDI). The ABC transmembrane type-1 domain maps to 280–479 (IVSSAITGLI…CISIFSRLLG (200 aa)).

This sequence belongs to the binding-protein-dependent transport system permease family. OppBC subfamily.

Its subcellular location is the cell membrane. In terms of biological role, part of the binding-protein-dependent transport system for oligopeptides; probably responsible for the translocation of the substrate across the membrane. The polypeptide is Oligopeptide transport system permease protein AmiC (amiC) (Streptococcus pneumoniae serotype 4 (strain ATCC BAA-334 / TIGR4)).